The following is a 155-amino-acid chain: MAEAAPQDTQQHFAIQRIFLKDVSFEAPNSPVMFQKEWNPDVKLDLDTQSRELGEGVYEVILRLTVTVKNAEETAFLCEVQQGGIFTAEKMEAGQLAHCLGAFCPNILFPYARETISSLVVKGTFPQLNLAPVNFDALFMNYLQQQAAQQGAEQA.

This sequence belongs to the SecB family. Homotetramer, a dimer of dimers. One homotetramer interacts with 1 SecA dimer.

It localises to the cytoplasm. In terms of biological role, one of the proteins required for the normal export of preproteins out of the cell cytoplasm. It is a molecular chaperone that binds to a subset of precursor proteins, maintaining them in a translocation-competent state. It also specifically binds to its receptor SecA. This chain is Protein-export protein SecB, found in Vibrio vulnificus (strain CMCP6).